The chain runs to 60 residues: Large ribosomal subunit protein bL32 (60 aa).

The segment at 1–60 (MAVQQNKKSPSKRGMHRSHNALTVPGIAVESTTGETHLRHHISPTGFYRGRKVLKTKSEA) is disordered. Basic residues-rich tracts occupy residues 9–19 (SPSKRGMHRSH) and 49–60 (RGRKVLKTKSEA).

It belongs to the bacterial ribosomal protein bL32 family.

This is Large ribosomal subunit protein bL32 from Polaromonas sp. (strain JS666 / ATCC BAA-500).